The chain runs to 736 residues: Elongation factor 2 (736 aa).

Residues 18 to 234 (TRVRNIGIIA…VIDAYTASDK (217 aa)) form the tr-type G domain. Residues 27 to 34 (AHVDHGKT), 93 to 97 (DTPGH), and 147 to 150 (NKVD) each bind GTP. Residue His-603 is modified to Diphthamide.

The protein belongs to the TRAFAC class translation factor GTPase superfamily. Classic translation factor GTPase family. EF-G/EF-2 subfamily.

It is found in the cytoplasm. Its function is as follows. Catalyzes the GTP-dependent ribosomal translocation step during translation elongation. During this step, the ribosome changes from the pre-translocational (PRE) to the post-translocational (POST) state as the newly formed A-site-bound peptidyl-tRNA and P-site-bound deacylated tRNA move to the P and E sites, respectively. Catalyzes the coordinated movement of the two tRNA molecules, the mRNA and conformational changes in the ribosome. This is Elongation factor 2 from Saccharolobus islandicus (strain Y.N.15.51 / Yellowstone #2) (Sulfolobus islandicus).